The primary structure comprises 272 residues: Dermonecrotic toxin LvSicTox-alphaIC1bii (272 aa).

His5 is an active-site residue. Mg(2+) is bound by residues Glu25 and Asp27. The active-site Nucleophile is His41. 2 disulfides stabilise this stretch: Cys45–Cys51 and Cys47–Cys189. A Mg(2+)-binding site is contributed by Asp84.

Belongs to the arthropod phospholipase D family. Class II subfamily. The cofactor is Mg(2+). In terms of tissue distribution, expressed by the venom gland.

Its subcellular location is the secreted. The catalysed reaction is an N-(acyl)-sphingosylphosphocholine = an N-(acyl)-sphingosyl-1,3-cyclic phosphate + choline. It carries out the reaction an N-(acyl)-sphingosylphosphoethanolamine = an N-(acyl)-sphingosyl-1,3-cyclic phosphate + ethanolamine. It catalyses the reaction a 1-acyl-sn-glycero-3-phosphocholine = a 1-acyl-sn-glycero-2,3-cyclic phosphate + choline. The enzyme catalyses a 1-acyl-sn-glycero-3-phosphoethanolamine = a 1-acyl-sn-glycero-2,3-cyclic phosphate + ethanolamine. Dermonecrotic toxins cleave the phosphodiester linkage between the phosphate and headgroup of certain phospholipids (sphingolipid and lysolipid substrates), forming an alcohol (often choline) and a cyclic phosphate. This toxin acts on sphingomyelin (SM). It may also act on ceramide phosphoethanolamine (CPE), lysophosphatidylcholine (LPC) and lysophosphatidylethanolamine (LPE), but not on lysophosphatidylserine (LPS), and lysophosphatidylglycerol (LPG). It acts by transphosphatidylation, releasing exclusively cyclic phosphate products as second products. Induces dermonecrosis, hemolysis, increased vascular permeability, edema, inflammatory response, and platelet aggregation. The protein is Dermonecrotic toxin LvSicTox-alphaIC1bii of Loxosceles variegata (Recluse spider).